Consider the following 348-residue polypeptide: 3-isopropylmalate dehydrogenase (348 aa).

76 to 87 is a binding site for NAD(+); sequence GPKWTDPNNRPE. Substrate contacts are provided by Arg94, Arg104, Arg132, and Asp217. 3 residues coordinate Mg(2+): Asp217, Asp241, and Asp245. 275–287 is a binding site for NAD(+); the sequence is GSAPDIAGKNVAN.

Belongs to the isocitrate and isopropylmalate dehydrogenases family. LeuB type 1 subfamily. As to quaternary structure, homodimer. It depends on Mg(2+) as a cofactor. Mn(2+) serves as cofactor.

Its subcellular location is the cytoplasm. It carries out the reaction (2R,3S)-3-isopropylmalate + NAD(+) = 4-methyl-2-oxopentanoate + CO2 + NADH. It functions in the pathway amino-acid biosynthesis; L-leucine biosynthesis; L-leucine from 3-methyl-2-oxobutanoate: step 3/4. Catalyzes the oxidation of 3-carboxy-2-hydroxy-4-methylpentanoate (3-isopropylmalate) to 3-carboxy-4-methyl-2-oxopentanoate. The product decarboxylates to 4-methyl-2 oxopentanoate. The protein is 3-isopropylmalate dehydrogenase of Staphylococcus aureus (strain MRSA252).